The chain runs to 421 residues: Elsinochrome C biosynthesis regulatory protein elcR (421 aa).

The span at 1–16 shows a compositional bias: polar residues; sequence MATQLPSPTATTSHSG. The segment at 1-20 is disordered; the sequence is MATQLPSPTATTSHSGNEPR. Residues 27–54 constitute a DNA-binding region (zn(2)-C6 fungal-type); that stretch reads CNNCSAQKIRCGKQRPACARCVNKKLQC.

Its subcellular location is the nucleus. Functionally, transcription regulator of the gene cluster that mediates the biosynthesis of elsinochrome C, a perelyenequinone phytotoxin structurally similar to cercosporin. This Phaeosphaeria nodorum (strain SN15 / ATCC MYA-4574 / FGSC 10173) (Glume blotch fungus) protein is Elsinochrome C biosynthesis regulatory protein elcR.